The primary structure comprises 128 residues: LIM domain-containing protein 2 (128 aa).

Residue Met1 is modified to N-acetylmethionine. The interval 1-25 is disordered; it reads MFQAAGAAQATPSHEAKGGGSSSTV. One can recognise an LIM zinc-binding domain in the interval 39–99; it reads ETCAACQKTV…KPHFQQLFKS (61 aa). Zn(2+)-binding residues include Cys41, Cys44, His62, Cys65, Cys68, Cys71, Cys89, and His92.

Interacts with ILK.

It localises to the cytoplasm. The protein localises to the nucleus. Its function is as follows. Acts as an activator of the protein-kinase ILK, thereby regulating cell motility. This chain is LIM domain-containing protein 2 (LIMD2), found in Bos taurus (Bovine).